The primary structure comprises 30 residues: Cyclotide cter-O (30 aa).

Residues 1-30 (GIPCGESCVFIPCITGIAGCSCKSKVCYRN) constitute a cross-link (cyclopeptide (Gly-Asn)). 3 cysteine pairs are disulfide-bonded: Cys-4–Cys-20, Cys-8–Cys-22, and Cys-13–Cys-27.

In terms of processing, this is a cyclic peptide.

It localises to the secreted. Probably participates in a plant defense mechanism. The chain is Cyclotide cter-O from Clitoria ternatea (Butterfly pea).